We begin with the raw amino-acid sequence, 384 residues long: F-box A protein 224 (384 aa).

An F-box domain is found at 71 to 122; it reads PKSLSDFPIGVMYDVLGHVDPFERLVLRKVSRNLRDVVQKMRCELDALYVNK.

It belongs to the FTH family.

The protein is F-box A protein 224 (fbxa-224) of Caenorhabditis elegans.